Reading from the N-terminus, the 122-residue chain is Large ribosomal subunit protein uL14c (122 aa).

This sequence belongs to the universal ribosomal protein uL14 family. As to quaternary structure, part of the 50S ribosomal subunit.

It localises to the plastid. The protein localises to the chloroplast. Its function is as follows. Binds to 23S rRNA. The protein is Large ribosomal subunit protein uL14c of Lepidium virginicum (Virginia pepperweed).